The primary structure comprises 476 residues: Adenosylhomocysteinase (476 aa).

Residues Thr-67, Asp-142, and Glu-202 each coordinate substrate. 203–205 provides a ligand contact to NAD(+); that stretch reads TTT. Substrate-binding residues include Lys-232 and Asp-236. NAD(+) is bound by residues Asn-237, 266 to 271, Glu-289, Asn-324, 345 to 347, and Asn-390; these read GYGDVG and IGH.

Belongs to the adenosylhomocysteinase family. It depends on NAD(+) as a cofactor.

The protein resides in the cytoplasm. The enzyme catalyses S-adenosyl-L-homocysteine + H2O = L-homocysteine + adenosine. It functions in the pathway amino-acid biosynthesis; L-homocysteine biosynthesis; L-homocysteine from S-adenosyl-L-homocysteine: step 1/1. May play a key role in the regulation of the intracellular concentration of adenosylhomocysteine. The sequence is that of Adenosylhomocysteinase from Prochlorococcus marinus (strain MIT 9303).